We begin with the raw amino-acid sequence, 267 residues long: Membrane-spanning 4-domains subfamily A member 10 (267 aa).

Over 1-61 (MKAEATVIPS…KKSSLLKELG (61 aa)) the chain is Cytoplasmic. A helical membrane pass occupies residues 62–82 (AFHITIALLHLVFGGYLASIV). The Extracellular segment spans residues 83–91 (KNLHLVVLK). Residues 92–112 (SWYPFWGAASFLISGILAITM) traverse the membrane as a helical segment. Topologically, residues 113–121 (KTFSKTYLK) are cytoplasmic. Residues 122–142 (MLCLMTNLISLFCVLSGLFVI) form a helical membrane-spanning segment. Topologically, residues 143–171 (SKDLFLESPFESPIWRMYPNSTVHIQRLE) are extracellular. The helical transmembrane segment at 172–192 (LALLCFTVLELFLPVPTAVTA) threads the bilayer. The Cytoplasmic portion of the chain corresponds to 193–267 (WRGDCPSAKN…GAAIWTQTAN (75 aa)).

Belongs to the MS4A family.

Its subcellular location is the membrane. Functionally, may be involved in signal transduction as a component of a multimeric receptor complex. This Homo sapiens (Human) protein is Membrane-spanning 4-domains subfamily A member 10 (MS4A10).